The following is a 2285-amino-acid chain: AT-rich interactive domain-containing protein 1A (2285 aa).

The segment covering 1–14 has biased composition (low complexity); sequence MAAQVAPAAASSLG. Disordered stretches follow at residues 1 to 820 and 978 to 1005; these read MAAQ…ALPN and ATKM…TTTN. Ala2 is modified (N-acetylalanine). Residues 23-35 show a composition bias toward basic and acidic residues; sequence ELKKAEQQQREEA. Residues Ser58 and Ser79 each carry the phosphoserine modification. Gly residues-rich tracts occupy residues 79-95 and 121-130; these read SNGG…GGPG and PGGGGGGSSD. Composition is skewed to low complexity over residues 131–142, 212–221, and 228–265; these read GVGAPPHSAAAA, YNSYYPNRSA, and AYAL…SSSS. At Ser233 the chain carries Phosphoserine. Positions 273 to 286 are enriched in gly residues; it reads AMGGGGPSAAGGGT. Phosphothreonine is present on Thr286. An LXXLL motif is present at residues 295 to 299; it reads LNQLL. The span at 295 to 306 shows a compositional bias: polar residues; the sequence is LNQLLTSPSSAR. Phosphoserine is present on Ser301. A compositionally biased stretch (gly residues) spans 310-327; it reads GYPGGDYSGGPQDGGAGK. The segment covering 338-353 has biased composition (low complexity); that stretch reads GAAAAAAAAAAASGGA. A phosphoserine mark is found at Ser363 and Ser382. Low complexity predominate over residues 400 to 425; it reads PYSQQQGPPSGPQQGHGYPGQPYGSQ. Arg429 is modified (asymmetric dimethylarginine). Low complexity-rich tracts occupy residues 447–457, 465–546, and 553–595; these read YTQQIPPYGQQ, QGQT…QHPQ, and QPQA…YSQQ. Phosphoserine is present on Ser604. Over residues 610–621 the composition is skewed to low complexity; the sequence is SQASSAPSMTSS. Residues 628-637 show a composition bias toward polar residues; sequence MNLSLQSRPS. Residues 658-674 show a composition bias toward low complexity; that stretch reads SPGVSTSGISSSQGEQS. Positions 675-685 are enriched in polar residues; sequence NPAQSPFSPHT. Phosphoserine occurs at positions 696, 698, 702, 730, 764, and 772. 2 stretches are compositionally biased toward polar residues: residues 730-747 and 755-793; these read SGQS…SSIA and RNPQ…QNSM. Over residues 797-807 the composition is skewed to gly residues; the sequence is GPQGGQYGPQG. Residues 808–820 show a composition bias toward low complexity; the sequence is GYPRQPNYNALPN. The ARID domain maps to 1017 to 1108; it reads EPERKMWVDR…CLYAFECKIE (92 aa). 2 disordered regions span residues 1113-1483 and 1539-1603; these read PPPD…MMGG and ANHE…SPSK. Low complexity predominate over residues 1141–1154; sequence MQGPQTPQSTSSSM. Residues 1162–1177 show a composition bias toward pro residues; sequence PPTPASTPHSQIPPLP. Phosphoserine is present on Ser1184. The span at 1194–1219 shows a compositional bias: polar residues; the sequence is GSDSTFQKRNSMTPNPGYQPSMNTSD. A Phosphoserine modification is found at Ser1235. Arg1276 carries the omega-N-methylarginine modification. 2 stretches are compositionally biased toward polar residues: residues 1299–1315 and 1339–1356; these read NMST…SNPD and YGNQ…PFPS. Low complexity predominate over residues 1357–1367; that stretch reads QQTTMYQQQQQ. The short motif at 1368-1387 is the Nuclear localization signal element; that stretch reads NYKRPMDGTYGPPAKRHEGE. Residues 1396-1425 show a composition bias toward low complexity; that stretch reads GQGQPQQQQLPPAQPQPASQQQAAQPSPQQ. Polar residues predominate over residues 1468-1477; sequence PGTNAQQNMP. Pro residues predominate over residues 1554-1577; sequence PYGPSAPVPPMTRPPPSNYQPPPS. Ser1604 bears the Phosphoserine mark. Position 1612 is an N6-acetyllysine (Lys1612). Positions 1709–1713 match the LXXLL motif; the sequence is LPGLL. Disordered stretches follow at residues 1747–1774 and 1859–1907; these read PGRF…PKLE and FESK…EKRI. 2 positions are modified to phosphoserine: Ser1751 and Ser1754. Positions 1761 to 1774 are enriched in acidic residues; it reads GGEEEEELLGPKLE. A compositionally biased stretch (low complexity) spans 1886–1895; it reads EGTPGTTDQE. Position 1888 is a phosphothreonine (Thr1888). N6-acetyllysine is present on Lys1905. Residues Ser1929 and Ser1944 each carry the phosphoserine modification. Short sequence motifs (LXXLL) lie at residues 1967 to 1971 and 2085 to 2089; these read LCTLL and LDGLL.

As to quaternary structure, component of SWI/SNF chromatin remodeling complexes, in some of which it can be mutually exclusive with ARID1B/BAF250B. The canonical complex contains a catalytic subunit (either SMARCA4/BRG1/BAF190A or SMARCA2/BRM/BAF190B) and at least SMARCE1, ACTL6A/BAF53, SMARCC1/BAF155, SMARCC2/BAF170, and SMARCB1/SNF5/BAF47. Other subunits specific to each of the complexes may also be present permitting several possible combinations developmentally and tissue specific. Component of the BAF (SWI/SNF-A) complex, which includes at least actin (ACTB), ARID1A/BAF250A, ARID1B/BAF250B, SMARCA2/BRM, SMARCA4/BRG1/BAF190A, ACTL6A/BAF53, ACTL6B/BAF53B, SMARCE1/BAF57, SMARCC1/BAF155, SMARCC2/BAF170, SMARCB1/SNF5/INI1, and one or more SMARCD1/BAF60A, SMARCD2/BAF60B, or SMARCD3/BAF60C. In muscle cells, the BAF complex also contains DPF3. Component of neural progenitors-specific chromatin remodeling complex (npBAF complex) composed of at least, ARID1A/BAF250A or ARID1B/BAF250B, SMARCD1/BAF60A, SMARCD3/BAF60C, SMARCA2/BRM/BAF190B, SMARCA4/BRG1/BAF190A, SMARCB1/BAF47, SMARCC1/BAF155, SMARCE1/BAF57, SMARCC2/BAF170, PHF10/BAF45A, ACTL6A/BAF53A and actin. Component of neuron-specific chromatin remodeling complex (nBAF complex) composed of at least, ARID1A/BAF250A or ARID1B/BAF250B, SMARCD1/BAF60A, SMARCD3/BAF60C, SMARCA2/BRM/BAF190B, SMARCA4/BRG1/BAF190A, SMARCB1/BAF47, SMARCC1/BAF155, SMARCE1/BAF57, SMARCC2/BAF170, DPF1/BAF45B, DPF3/BAF45C, ACTL6B/BAF53B and actin. Component of a SWI/SNF-like EBAFa complex, at least composed of SMARCA4/BRG1/BAF190A, SMARCB1/BAF47/SNF5, ACTL6A/BAF53A, SMARCE1/BAF57, SMARCD1/BAF60A, SMARCC1/BAF155, SMARCC2/BAF170, BAF250A and MLLT1/ENL. Interacts through its C-terminus with SMARCA2/BRM/BAF190B and SMARCA4/BRG1/BAF190A. Interacts with SMARCC1/BAF155. Interacts with FOS, FOSB isoform 1 and 2, FOSL1 and FOSL2. As to expression, highly expressed in spleen, thymus, prostate, testis, ovary, small intestine, colon, and PBL, and at a much lower level in heart, brain, placenta, lung, liver, skeletal muscle, kidney, and pancreas.

It localises to the nucleus. Involved in transcriptional activation and repression of select genes by chromatin remodeling (alteration of DNA-nucleosome topology). Component of SWI/SNF chromatin remodeling complexes that carry out key enzymatic activities, changing chromatin structure by altering DNA-histone contacts within a nucleosome in an ATP-dependent manner. Binds DNA non-specifically. Belongs to the neural progenitors-specific chromatin remodeling complex (npBAF complex) and the neuron-specific chromatin remodeling complex (nBAF complex). During neural development a switch from a stem/progenitor to a postmitotic chromatin remodeling mechanism occurs as neurons exit the cell cycle and become committed to their adult state. The transition from proliferating neural stem/progenitor cells to postmitotic neurons requires a switch in subunit composition of the npBAF and nBAF complexes. As neural progenitors exit mitosis and differentiate into neurons, npBAF complexes which contain ACTL6A/BAF53A and PHF10/BAF45A, are exchanged for homologous alternative ACTL6B/BAF53B and DPF1/BAF45B or DPF3/BAF45C subunits in neuron-specific complexes (nBAF). The npBAF complex is essential for the self-renewal/proliferative capacity of the multipotent neural stem cells. The nBAF complex along with CREST plays a role regulating the activity of genes essential for dendrite growth. This chain is AT-rich interactive domain-containing protein 1A (ARID1A), found in Homo sapiens (Human).